The primary structure comprises 285 residues: Protein phosphatase 1 regulatory subunit 3B (285 aa).

Positions 62–65 match the PP1-binding motif motif; that stretch reads RVSF. One can recognise a CBM21 domain in the interval 125–233; the sequence is RNRLQADHVC…SNRGKNYRII (109 aa). At serine 261 the chain carries Phosphoserine.

In terms of assembly, interacts with glycogen, PPP1CC catalytic subunit of PP1 and PYGL. Associates with glycogen particles. Forms complexes with debranching enzyme, glycogen phosphorylase, glycogen synthase and phosphorylase kinase which is necessary for its regulation of PP1 activity. As to expression, highly expressed in the liver and, at lower levels, in skeletal muscle, including in vastus lateralis, gastrocnemius and soleus (at protein level). Highest mRNA levels are observed in skeletal muscle, and only moderate levels in liver and heart. Weak expression in placenta and lung.

Functionally, acts as a glycogen-targeting subunit for phosphatase PP1. Facilitates interaction of the PP1 with enzymes of the glycogen metabolism and regulates its activity. Suppresses the rate at which PP1 dephosphorylates (inactivates) glycogen phosphorylase and enhances the rate at which it activates glycogen synthase and therefore limits glycogen breakdown. Its activity is inhibited by PYGL, resulting in inhibition of the glycogen synthase and glycogen phosphorylase phosphatase activities of PP1. Dramatically increases basal and insulin-stimulated glycogen synthesis upon overexpression in hepatocytes. The protein is Protein phosphatase 1 regulatory subunit 3B (PPP1R3B) of Homo sapiens (Human).